A 666-amino-acid polypeptide reads, in one-letter code: Kinesin-like protein Nod (666 aa).

The Kinesin motor domain maps to 8–320 (AVRIAVREAP…LRFGTSAKKL (313 aa)). 87–94 (GQTGTGKS) contacts ATP. The tract at residues 423-450 (GFHSDSDKDRHLMPPPTGQEPRQASSQN) is disordered. Residues 639–666 (ENLFQVKSLPIWSGNKWERFCQINCLDT) are a coiled coil.

This sequence belongs to the TRAFAC class myosin-kinesin ATPase superfamily. Kinesin family. As to expression, in adult female, found in meiotically active ovaries.

The protein resides in the cytoplasm. It localises to the cytoskeleton. Functionally, required for the distributive chromosome segregation of non-exchange chromosomes during meiosis. May be a microtubule motor required to hold distributively 'paired' chromosomes at the metaphase plate until anaphase. This is Kinesin-like protein Nod (nod) from Drosophila melanogaster (Fruit fly).